Consider the following 203-residue polypeptide: Endo-type membrane-bound lytic murein transglycosylase A (203 aa).

The first 15 residues, methionine 1–glycine 15, serve as a signal peptide directing secretion. A lipid anchor (N-palmitoyl cysteine) is attached at cysteine 16. Cysteine 16 carries S-diacylglycerol cysteine lipidation.

It belongs to the transglycosylase Slt family.

The protein localises to the cell outer membrane. It carries out the reaction Endolytic cleavage of the (1-&gt;4)-beta-glycosidic linkage between N-acetylmuramic acid (MurNAc) and N-acetylglucosamine (GlcNAc) residues in peptidoglycan with concomitant formation of a 1,6-anhydrobond in the MurNAc residue.. In terms of biological role, murein-degrading enzyme. May play a role in recycling of muropeptides during cell elongation and/or cell division. Preferentially cleaves at a distance of more than two disaccharide units from the ends of the glycan chain. The sequence is that of Endo-type membrane-bound lytic murein transglycosylase A from Enterobacter sp. (strain 638).